An 80-amino-acid chain; its full sequence is RNA-binding protein Hfq (80 aa).

The 60-residue stretch at 10–69 (DPFLNLLRKEHVPVSIYLVNGIKLQGHIESFDQYVVLLRNTVTQMVYKHAISTVVPGRPV) folds into the Sm domain.

The protein belongs to the Hfq family. In terms of assembly, homohexamer.

Its function is as follows. RNA chaperone that binds small regulatory RNA (sRNAs) and mRNAs to facilitate mRNA translational regulation in response to envelope stress, environmental stress and changes in metabolite concentrations. Also binds with high specificity to tRNAs. The polypeptide is RNA-binding protein Hfq (Leptothrix cholodnii (strain ATCC 51168 / LMG 8142 / SP-6) (Leptothrix discophora (strain SP-6))).